Here is a 469-residue protein sequence, read N- to C-terminus: 1-aminocyclopropane-1-carboxylate synthase 8 (469 aa).

Residues Glu-47 and Tyr-85 each coordinate substrate. Lys-272 is subject to N6-(pyridoxal phosphate)lysine.

Belongs to the class-I pyridoxal-phosphate-dependent aminotransferase family. In terms of assembly, homodimer and heterodimer. In vivo, the relevance of heterodimerization with other ACS enzymes is however unsure. Interacts with GRF3. The cofactor is pyridoxal 5'-phosphate. Post-translationally, may be processed at its C-terminus. Expressed in roots. Expressed at low level in flowers and siliques.

It catalyses the reaction S-adenosyl-L-methionine = 1-aminocyclopropane-1-carboxylate + S-methyl-5'-thioadenosine + H(+). Its pathway is alkene biosynthesis; ethylene biosynthesis via S-adenosyl-L-methionine; ethylene from S-adenosyl-L-methionine: step 1/2. 1-aminocyclopropane-1-carboxylate synthase (ACS) enzymes catalyze the conversion of S-adenosyl-L-methionine (SAM) into 1-aminocyclopropane-1-carboxylate (ACC), a direct precursor of ethylene. This chain is 1-aminocyclopropane-1-carboxylate synthase 8 (ACS8), found in Arabidopsis thaliana (Mouse-ear cress).